Reading from the N-terminus, the 437-residue chain is Probable E3 ubiquitin-protein ligase TRIML2 (437 aa).

The B box-type zinc finger occupies 14–55 (TEDAYCETHLEPTRLFCDVDQITLCSKCFQSQEHKHHMVCGI). Zn(2+)-binding residues include Cys19, His22, Cys41, and His47. Residues 55–200 (IQEAAENYRK…IVELEKKCGE (146 aa)) are a coiled coil. In terms of domain architecture, B30.2/SPRY spans 231–429 (DLSLCHIRGL…DSLTILQHGP (199 aa)).

The enzyme catalyses S-ubiquitinyl-[E2 ubiquitin-conjugating enzyme]-L-cysteine + [acceptor protein]-L-lysine = [E2 ubiquitin-conjugating enzyme]-L-cysteine + N(6)-ubiquitinyl-[acceptor protein]-L-lysine.. It participates in protein modification; protein ubiquitination. The sequence is that of Probable E3 ubiquitin-protein ligase TRIML2 from Homo sapiens (Human).